Here is a 139-residue protein sequence, read N- to C-terminus: Large ribosomal subunit protein uL16 (139 aa).

The disordered stretch occupies residues 74 to 94 (LTKKPAETRQGSGKGSPESWV).

The protein belongs to the universal ribosomal protein uL16 family. As to quaternary structure, part of the 50S ribosomal subunit.

Binds 23S rRNA and is also seen to make contacts with the A and possibly P site tRNAs. This chain is Large ribosomal subunit protein uL16, found in Saccharopolyspora erythraea (strain ATCC 11635 / DSM 40517 / JCM 4748 / NBRC 13426 / NCIMB 8594 / NRRL 2338).